A 443-amino-acid chain; its full sequence is Carboxypeptidase M (443 aa).

Positions 1 to 17 are cleaved as a signal peptide; sequence MDFPCLWLGLLLPLVAA. The 291-residue stretch at 21–311 folds into the Peptidase M14 domain; that stretch reads NYHRQEGMEA…ASLIEYIKQV (291 aa). N-linked (GlcNAc...) asparagine glycosylation occurs at N38. Zn(2+) is bound by residues H83 and E86. N115 and N164 each carry an N-linked (GlcNAc...) asparagine glycan. Intrachain disulfides connect C138–C285, C242–C284, and C341–C410. A Zn(2+)-binding site is contributed by H190. E281 functions as the Proton donor/acceptor in the catalytic mechanism. Residues N363 and N384 are each glycosylated (N-linked (GlcNAc...) asparagine). S423 carries GPI-anchor amidated serine lipidation. Positions 424-443 are cleaved as a propeptide — removed in mature form; the sequence is AATKPSLFLFLVSLLHIFFK.

It belongs to the peptidase M14 family. Requires Zn(2+) as cofactor.

The protein localises to the cell membrane. It catalyses the reaction Cleavage of C-terminal arginine or lysine residues from polypeptides.. Inhibited by O-phenanthroline and MGTA and activated by cobalt. Its function is as follows. Specifically removes C-terminal basic residues (Arg or Lys) from peptides and proteins. It is believed to play important roles in the control of peptide hormone and growth factor activity at the cell surface, and in the membrane-localized degradation of extracellular proteins. The chain is Carboxypeptidase M (CPM) from Homo sapiens (Human).